Here is a 215-residue protein sequence, read N- to C-terminus: NADH-quinone oxidoreductase subunit C (215 aa).

Belongs to the complex I 30 kDa subunit family. NDH-1 is composed of 14 different subunits. Subunits NuoB, C, D, E, F, and G constitute the peripheral sector of the complex.

The protein localises to the cell inner membrane. The enzyme catalyses a quinone + NADH + 5 H(+)(in) = a quinol + NAD(+) + 4 H(+)(out). Its function is as follows. NDH-1 shuttles electrons from NADH, via FMN and iron-sulfur (Fe-S) centers, to quinones in the respiratory chain. The immediate electron acceptor for the enzyme in this species is believed to be ubiquinone. Couples the redox reaction to proton translocation (for every two electrons transferred, four hydrogen ions are translocated across the cytoplasmic membrane), and thus conserves the redox energy in a proton gradient. The sequence is that of NADH-quinone oxidoreductase subunit C from Dinoroseobacter shibae (strain DSM 16493 / NCIMB 14021 / DFL 12).